A 465-amino-acid polypeptide reads, in one-letter code: Methionine aminopeptidase 2-1 (465 aa).

The disordered stretch occupies residues 1-100; sequence MGSKTAENES…QSSPPRIPLA (100 aa). A compositionally biased stretch (basic and acidic residues) spans 31–40; it reads RGAHWSRDGD. The segment covering 75–87 has biased composition (basic residues); the sequence is SKKRKKRPKKKTS. Histidine 216 is a substrate binding site. A divalent metal cation is bound by residues aspartate 237, aspartate 248, and histidine 317. Histidine 325 contacts substrate. Glutamate 350 and glutamate 446 together coordinate a divalent metal cation.

The protein belongs to the peptidase M24A family. Methionine aminopeptidase eukaryotic type 2 subfamily. Co(2+) serves as cofactor. Requires Zn(2+) as cofactor. Mn(2+) is required as a cofactor. The cofactor is Fe(2+).

It localises to the cytoplasm. It catalyses the reaction Release of N-terminal amino acids, preferentially methionine, from peptides and arylamides.. In terms of biological role, cotranslationally removes the N-terminal methionine from nascent proteins. The N-terminal methionine is often cleaved when the second residue in the primary sequence is small and uncharged (Met-Ala-, Cys, Gly, Pro, Ser, Thr, or Val). The chain is Methionine aminopeptidase 2-1 from Penicillium rubens (strain ATCC 28089 / DSM 1075 / NRRL 1951 / Wisconsin 54-1255) (Penicillium chrysogenum).